A 183-amino-acid polypeptide reads, in one-letter code: Streptavidin (183 aa).

The N-terminal stretch at 1-24 (MRKIVVAAIAVSLTTVSITASASA) is a signal peptide. The Avidin-like domain occupies 37–159 (AEAGITGTWY…GHDTFTKVKP (123 aa)). Biotin is bound by residues Tyr-67 and Tyr-78. Residues 83–85 (RYD) carry the Cell attachment site; atypical motif. Trp-116, Trp-132, and Trp-144 together coordinate biotin.

Belongs to the avidin/streptavidin family. In terms of assembly, homotetramer.

It localises to the secreted. In terms of biological role, the biological function of streptavidin is not known. Forms a strong non-covalent specific complex with biotin (one molecule of biotin per subunit of streptavidin). This is Streptavidin from Streptomyces avidinii.